We begin with the raw amino-acid sequence, 314 residues long: Porphobilinogen deaminase (314 aa).

At Cys234 the chain carries S-(dipyrrolylmethanemethyl)cysteine.

The protein belongs to the HMBS family. In terms of assembly, monomer. Dipyrromethane serves as cofactor.

The catalysed reaction is 4 porphobilinogen + H2O = hydroxymethylbilane + 4 NH4(+). It participates in porphyrin-containing compound metabolism; protoporphyrin-IX biosynthesis; coproporphyrinogen-III from 5-aminolevulinate: step 2/4. Tetrapolymerization of the monopyrrole PBG into the hydroxymethylbilane pre-uroporphyrinogen in several discrete steps. The protein is Porphobilinogen deaminase of Mycobacterium marinum (strain ATCC BAA-535 / M).